Consider the following 620-residue polypeptide: NADPH-dependent diflavin oxidoreductase 1 (620 aa).

Residues 6-168 enclose the Flavodoxin-like domain; the sequence is IAILYGSETG…VYSEFEKRVL (163 aa). Residues 12–17, 59–62, and 106–115 contribute to the FMN site; these read SETGTA, STTG, and LGDSSYSKFN. One can recognise an FAD-binding FR-type domain in the interval 222 to 475; it reads SSVKYGTVVT…LLPAGKQDRP (254 aa). FAD contacts are provided by residues R380, 410–413, and 442–445; these read RFFS and GLCT. 535–536 contacts NADP(+); it reads SR. W620 lines the FAD pocket.

Belongs to the NADPH-dependent diflavin oxidoreductase NDOR1 family. This sequence in the N-terminal section; belongs to the flavodoxin family. The protein in the C-terminal section; belongs to the flavoprotein pyridine nucleotide cytochrome reductase family. As to quaternary structure, interacts with DRE2; as part of the cytosolic iron-sulfur (Fe-S) protein assembly (CIA) machinery. The cofactor is FAD. FMN serves as cofactor.

It is found in the cytoplasm. The protein resides in the mitochondrion. The catalysed reaction is 2 oxidized [2Fe-2S]-[protein] + NADPH = 2 reduced [2Fe-2S]-[protein] + NADP(+) + H(+). In terms of biological role, NADPH-dependent reductase which is a central component of the cytosolic iron-sulfur (Fe-S) protein assembly (CIA) machinery. Transfers electrons from NADPH via its FAD and FMN prosthetic groups to the [2Fe-2S] cluster of DRE2, another key component of the CIA machinery. In turn, this reduced cluster provides electrons for assembly of cytosolic iron-sulfur cluster proteins. Positively controls H(2)O(2)-induced cell death. The chain is NADPH-dependent diflavin oxidoreductase 1 from Eremothecium gossypii (strain ATCC 10895 / CBS 109.51 / FGSC 9923 / NRRL Y-1056) (Yeast).